The following is a 271-amino-acid chain: 3-methyl-2-oxobutanoate hydroxymethyltransferase (271 aa).

Positions 49 and 88 each coordinate Mg(2+). Residues 49–50 (DS), aspartate 88, and lysine 118 each bind 3-methyl-2-oxobutanoate. Mg(2+) is bound at residue glutamate 120. Glutamate 187 functions as the Proton acceptor in the catalytic mechanism.

This sequence belongs to the PanB family. Homodecamer; pentamer of dimers. Requires Mg(2+) as cofactor.

It is found in the cytoplasm. It carries out the reaction 3-methyl-2-oxobutanoate + (6R)-5,10-methylene-5,6,7,8-tetrahydrofolate + H2O = 2-dehydropantoate + (6S)-5,6,7,8-tetrahydrofolate. The protein operates within cofactor biosynthesis; (R)-pantothenate biosynthesis; (R)-pantoate from 3-methyl-2-oxobutanoate: step 1/2. Catalyzes the reversible reaction in which hydroxymethyl group from 5,10-methylenetetrahydrofolate is transferred onto alpha-ketoisovalerate to form ketopantoate. This chain is 3-methyl-2-oxobutanoate hydroxymethyltransferase, found in Bartonella tribocorum (strain CIP 105476 / IBS 506).